The following is a 301-amino-acid chain: GTPase Era (301 aa).

Positions 7–175 constitute an Era-type G domain; that stretch reads YCGFIAIVGR…AGIVRKHLPE (169 aa). The G1 stretch occupies residues 15–22; sequence GRPNVGKS. A GTP-binding site is contributed by 15–22; sequence GRPNVGKS. Residues 41 to 45 are G2; sequence QTTRH. Residues 62–65 form a G3 region; it reads DTPG. GTP-binding positions include 62–66 and 124–127; these read DTPGL and NKVD. Residues 124–127 form a G4 region; sequence NKVD. The segment at 154–156 is G5; the sequence is ISA. The 78-residue stretch at 206–283 folds into the KH type-2 domain; the sequence is LGAELPYSVT…HLELWVKVKS (78 aa).

Belongs to the TRAFAC class TrmE-Era-EngA-EngB-Septin-like GTPase superfamily. Era GTPase family. As to quaternary structure, monomer.

Its subcellular location is the cytoplasm. It is found in the cell inner membrane. In terms of biological role, an essential GTPase that binds both GDP and GTP, with rapid nucleotide exchange. Plays a role in 16S rRNA processing and 30S ribosomal subunit biogenesis and possibly also in cell cycle regulation and energy metabolism. The sequence is that of GTPase Era from Salmonella paratyphi B (strain ATCC BAA-1250 / SPB7).